We begin with the raw amino-acid sequence, 149 residues long: SsrA-binding protein (149 aa).

Residues 123 to 149 (KQFDKRETEKQRDWQREKARIMKGGKE) form a disordered region.

This sequence belongs to the SmpB family.

The protein resides in the cytoplasm. Its function is as follows. Required for rescue of stalled ribosomes mediated by trans-translation. Binds to transfer-messenger RNA (tmRNA), required for stable association of tmRNA with ribosomes. tmRNA and SmpB together mimic tRNA shape, replacing the anticodon stem-loop with SmpB. tmRNA is encoded by the ssrA gene; the 2 termini fold to resemble tRNA(Ala) and it encodes a 'tag peptide', a short internal open reading frame. During trans-translation Ala-aminoacylated tmRNA acts like a tRNA, entering the A-site of stalled ribosomes, displacing the stalled mRNA. The ribosome then switches to translate the ORF on the tmRNA; the nascent peptide is terminated with the 'tag peptide' encoded by the tmRNA and targeted for degradation. The ribosome is freed to recommence translation, which seems to be the essential function of trans-translation. The polypeptide is SsrA-binding protein (Cupriavidus taiwanensis (strain DSM 17343 / BCRC 17206 / CCUG 44338 / CIP 107171 / LMG 19424 / R1) (Ralstonia taiwanensis (strain LMG 19424))).